A 347-amino-acid polypeptide reads, in one-letter code: MFVMSSSSIPNGIFIIDGQERYVNPEGDVESNKSERTSKASMVFQMCEKQCRDENGFKCHCMSESHQRQMQVLGQNPTRVVNGYSQEFEQTFLDLMRRSHRFSRVAATVVYNEYINDRLHVHMNSTKWATLTEFIKYLGKTAEEEKQEREIQKQIERASAGCEGKDVVVDDDDNDDDEKKKDEDFRLKKVGFALGLGVKERGESSKLVFGDEENDKVERGDKRKRSALDELMKEEEKKKERMNRKDYWLFEGIIVKGVVKRVIDKYVGEIEMLESKHVLRVDQVELKTVLPQIGGMVKIVNGAYRGSNTRLLDLDTEKFCAKVQIEKGVYDGRVIKSIEYEDICKLA.

Positions 222–225 match the Nuclear localization signal (NLS) motif; it reads KRKR.

Belongs to the KIN17 family.

It is found in the cytoplasm. Its subcellular location is the nucleus. Functionally, may act as repressor of root growth during copper excess and of hypocotyl growth in the dark. In Arabidopsis thaliana (Mouse-ear cress), this protein is KIN17-like protein KLP.